The chain runs to 142 residues: Calmodulin-alpha (142 aa).

Residue alanine 2 is modified to N-acetylalanine. 4 consecutive EF-hand domains span residues 8 to 43, 44 to 79, 81 to 116, and 117 to 142; these read EQIA…LGQN, PTEA…KMKD, DSEE…LGEK, and LTDE…YEEF. Aspartate 21, aspartate 23, aspartate 25, threonine 27, glutamate 32, aspartate 57, aspartate 59, asparagine 61, threonine 63, glutamate 68, aspartate 94, aspartate 96, asparagine 98, tyrosine 100, and glutamate 105 together coordinate Ca(2+). An N6,N6,N6-trimethyllysine modification is found at lysine 116. Residues aspartate 130, aspartate 132, aspartate 134, glutamine 136, and glutamate 141 each contribute to the Ca(2+) site.

This sequence belongs to the calmodulin family.

Functionally, calmodulin mediates the control of a large number of enzymes, ion channels and other proteins by Ca(2+). Among the enzymes to be stimulated by the calmodulin-Ca(2+) complex are a number of protein kinases and phosphatases. The sequence is that of Calmodulin-alpha from Arbacia punctulata (Punctuate sea urchin).